Reading from the N-terminus, the 639-residue chain is DNA mismatch repair protein MutL (639 aa).

The segment at 336 to 392 is disordered; it reads SAHDDPTPAISGAARDEEPRGVENRASAGENRFNRPASSPVASAPRPAHVAAPRMPA. The segment covering 349-358 has biased composition (basic and acidic residues); sequence ARDEEPRGVE. Residues 370–392 are compositionally biased toward low complexity; the sequence is RPASSPVASAPRPAHVAAPRMPA.

Belongs to the DNA mismatch repair MutL/HexB family.

In terms of biological role, this protein is involved in the repair of mismatches in DNA. It is required for dam-dependent methyl-directed DNA mismatch repair. May act as a 'molecular matchmaker', a protein that promotes the formation of a stable complex between two or more DNA-binding proteins in an ATP-dependent manner without itself being part of a final effector complex. In Edwardsiella ictaluri (strain 93-146), this protein is DNA mismatch repair protein MutL.